The following is a 326-amino-acid chain: Zinc-dependent endopolyphosphatase (326 aa).

The Cytoplasmic segment spans residues 1–9 (MEDKRKRRA). The chain crosses the membrane as a helical span at residues 10-30 (ATLSTALILFVACCVYTLYIF). The Vacuolar portion of the chain corresponds to 31–326 (KFDNPRLSPP…DYELIQVQCS (296 aa)). Residues Asn90 and Asn241 are each glycosylated (N-linked (GlcNAc...) asparagine).

It belongs to the metallophosphoesterase superfamily. As to quaternary structure, interacts with PPN1. It depends on Zn(2+) as a cofactor. Co(2+) serves as cofactor. The cofactor is Mg(2+).

It is found in the vacuole membrane. The enzyme catalyses [phosphate](n+1) + n H2O = (n+1) phosphate + n H(+). Its activity is regulated as follows. Not sensitive to heparin inhibition. Catalyzes the hydrolysis of inorganic polyphosphate (polyP) chains of many hundreds of phosphate residues into shorter lengths. Exclusively shows endopolyphosphatase activity, cleaving inside the polyP chain. Together with PPN1, responsible for a substantial fraction of polyphosphatase activity that is necessary to mobilize polyP stores in response to phosphate scarcity. The protein is Zinc-dependent endopolyphosphatase of Saccharomyces cerevisiae (strain ATCC 204508 / S288c) (Baker's yeast).